The primary structure comprises 309 residues: Probable manganese-dependent inorganic pyrophosphatase (309 aa).

The Mn(2+) site is built by histidine 9, aspartate 13, aspartate 15, aspartate 75, histidine 97, and aspartate 149.

This sequence belongs to the PPase class C family. The cofactor is Mn(2+).

It is found in the cytoplasm. It catalyses the reaction diphosphate + H2O = 2 phosphate + H(+). The chain is Probable manganese-dependent inorganic pyrophosphatase from Bacillus mycoides (strain KBAB4) (Bacillus weihenstephanensis).